The sequence spans 234 residues: tRNA (guanine-N(1)-)-methyltransferase (234 aa).

S-adenosyl-L-methionine-binding positions include glycine 115 and 135-140 (VGDYIL).

Belongs to the RNA methyltransferase TrmD family. As to quaternary structure, homodimer.

It localises to the cytoplasm. The catalysed reaction is guanosine(37) in tRNA + S-adenosyl-L-methionine = N(1)-methylguanosine(37) in tRNA + S-adenosyl-L-homocysteine + H(+). Specifically methylates guanosine-37 in various tRNAs. In Rickettsia africae (strain ESF-5), this protein is tRNA (guanine-N(1)-)-methyltransferase.